Reading from the N-terminus, the 262-residue chain is Adenosylcobinamide-GDP ribazoletransferase (262 aa).

The next 6 membrane-spanning stretches (helical) occupy residues Y43–Q63, L66–F86, G120–L140, A146–F166, L191–L211, and A242–L262.

Belongs to the CobS family. It depends on Mg(2+) as a cofactor.

It is found in the cell inner membrane. The catalysed reaction is alpha-ribazole + adenosylcob(III)inamide-GDP = adenosylcob(III)alamin + GMP + H(+). The enzyme catalyses alpha-ribazole 5'-phosphate + adenosylcob(III)inamide-GDP = adenosylcob(III)alamin 5'-phosphate + GMP + H(+). It participates in cofactor biosynthesis; adenosylcobalamin biosynthesis; adenosylcobalamin from cob(II)yrinate a,c-diamide: step 7/7. In terms of biological role, joins adenosylcobinamide-GDP and alpha-ribazole to generate adenosylcobalamin (Ado-cobalamin). Also synthesizes adenosylcobalamin 5'-phosphate from adenosylcobinamide-GDP and alpha-ribazole 5'-phosphate. The polypeptide is Adenosylcobinamide-GDP ribazoletransferase (Shewanella sp. (strain ANA-3)).